Reading from the N-terminus, the 314-residue chain is Methionyl-tRNA formyltransferase (314 aa).

113 to 116 (SLLP) contributes to the (6S)-5,6,7,8-tetrahydrofolate binding site.

The protein belongs to the Fmt family.

It catalyses the reaction L-methionyl-tRNA(fMet) + (6R)-10-formyltetrahydrofolate = N-formyl-L-methionyl-tRNA(fMet) + (6S)-5,6,7,8-tetrahydrofolate + H(+). Its function is as follows. Attaches a formyl group to the free amino group of methionyl-tRNA(fMet). The formyl group appears to play a dual role in the initiator identity of N-formylmethionyl-tRNA by promoting its recognition by IF2 and preventing the misappropriation of this tRNA by the elongation apparatus. The chain is Methionyl-tRNA formyltransferase from Pseudomonas syringae pv. tomato (strain ATCC BAA-871 / DC3000).